Consider the following 932-residue polypeptide: 2-oxoglutarate dehydrogenase E1 component (932 aa).

Belongs to the alpha-ketoglutarate dehydrogenase family. Homodimer. Part of the 2-oxoglutarate dehydrogenase (OGDH) complex composed of E1 (2-oxoglutarate dehydrogenase), E2 (dihydrolipoamide succinyltransferase) and E3 (dihydrolipoamide dehydrogenase); the complex contains multiple copies of the three enzymatic components (E1, E2 and E3). It depends on thiamine diphosphate as a cofactor.

The enzyme catalyses N(6)-[(R)-lipoyl]-L-lysyl-[protein] + 2-oxoglutarate + H(+) = N(6)-[(R)-S(8)-succinyldihydrolipoyl]-L-lysyl-[protein] + CO2. Its function is as follows. E1 component of the 2-oxoglutarate dehydrogenase (OGDH) complex which catalyzes the decarboxylation of 2-oxoglutarate, the first step in the conversion of 2-oxoglutarate to succinyl-CoA and CO(2). This is 2-oxoglutarate dehydrogenase E1 component from Staphylococcus aureus (strain MW2).